The sequence spans 244 residues: tRNA (guanine-N(7)-)-methyltransferase (244 aa).

A compositionally biased stretch (pro residues) spans 1 to 11; that stretch reads MTDTHVPPPEL. The interval 1 to 23 is disordered; sequence MTDTHVPPPELPAAEEGEERPHR. S-adenosyl-L-methionine contacts are provided by glutamate 74, glutamate 99, aspartate 126, and aspartate 149. The active site involves aspartate 149. Substrate is bound by residues lysine 153, aspartate 185, and 222 to 225; that span reads TKFE.

Belongs to the class I-like SAM-binding methyltransferase superfamily. TrmB family.

The catalysed reaction is guanosine(46) in tRNA + S-adenosyl-L-methionine = N(7)-methylguanosine(46) in tRNA + S-adenosyl-L-homocysteine. Its pathway is tRNA modification; N(7)-methylguanine-tRNA biosynthesis. Catalyzes the formation of N(7)-methylguanine at position 46 (m7G46) in tRNA. This is tRNA (guanine-N(7)-)-methyltransferase from Pseudomonas syringae pv. tomato (strain ATCC BAA-871 / DC3000).